We begin with the raw amino-acid sequence, 636 residues long: Fructose-1,6-bisphosphatase class 3 (636 aa).

Belongs to the FBPase class 3 family. Mn(2+) serves as cofactor.

It carries out the reaction beta-D-fructose 1,6-bisphosphate + H2O = beta-D-fructose 6-phosphate + phosphate. It participates in carbohydrate biosynthesis; gluconeogenesis. This Streptococcus sanguinis (strain SK36) protein is Fructose-1,6-bisphosphatase class 3.